The primary structure comprises 431 residues: Trigger factor (431 aa).

Residues 161–245 (TDIVIGDVQK…VKEIKRMELP (85 aa)) enclose the PPIase FKBP-type domain.

This sequence belongs to the FKBP-type PPIase family. Tig subfamily.

It localises to the cytoplasm. It catalyses the reaction [protein]-peptidylproline (omega=180) = [protein]-peptidylproline (omega=0). Involved in protein export. Acts as a chaperone by maintaining the newly synthesized protein in an open conformation. Functions as a peptidyl-prolyl cis-trans isomerase. This is Trigger factor from Chloroherpeton thalassium (strain ATCC 35110 / GB-78).